The primary structure comprises 185 residues: Large ribosomal subunit protein uL5 (185 aa).

This sequence belongs to the universal ribosomal protein uL5 family. As to quaternary structure, part of the 50S ribosomal subunit; part of the 5S rRNA/L5/L18/L25 subcomplex. Contacts the 5S rRNA and the P site tRNA. Forms a bridge to the 30S subunit in the 70S ribosome.

This is one of the proteins that bind and probably mediate the attachment of the 5S RNA into the large ribosomal subunit, where it forms part of the central protuberance. In the 70S ribosome it contacts protein S13 of the 30S subunit (bridge B1b), connecting the 2 subunits; this bridge is implicated in subunit movement. Contacts the P site tRNA; the 5S rRNA and some of its associated proteins might help stabilize positioning of ribosome-bound tRNAs. This Bradyrhizobium sp. (strain BTAi1 / ATCC BAA-1182) protein is Large ribosomal subunit protein uL5.